A 64-amino-acid chain; its full sequence is MPKAKTHSGASKRFRRTGTGKIVRQKANRRHLLEHKPTKRTRRLDGRTTVSAADNSRINKLLNG.

Over residues 1–42 (MPKAKTHSGASKRFRRTGTGKIVRQKANRRHLLEHKPTKRTR) the composition is skewed to basic residues. The disordered stretch occupies residues 1-64 (MPKAKTHSGA…NSRINKLLNG (64 aa)). A compositionally biased stretch (polar residues) spans 48-58 (TTVSAADNSRI).

This sequence belongs to the bacterial ribosomal protein bL35 family.

This is Large ribosomal subunit protein bL35 from Mycolicibacterium smegmatis (strain ATCC 700084 / mc(2)155) (Mycobacterium smegmatis).